The primary structure comprises 480 residues: uncharacterized protein (480 aa).

The first 21 residues, M1–A21, serve as a signal peptide directing secretion. Disordered stretches follow at residues S38–C72 and S116–T147. Residues L51–D60 show a composition bias toward low complexity. Residues L133–N144 show a composition bias toward polar residues. Residues Y153 to G173 form a helical membrane-spanning segment. Residues Q404–H480 form a disordered region. Over residues N407–R465 the composition is skewed to basic and acidic residues. Residues S411 to V467 adopt a coiled-coil conformation. The segment covering Q466–H480 has biased composition (basic residues).

The protein resides in the membrane. This is an uncharacterized protein from Arabidopsis thaliana (Mouse-ear cress).